We begin with the raw amino-acid sequence, 349 residues long: Protein-glutamate methylesterase/protein-glutamine glutaminase 3 (349 aa).

The Response regulatory domain occupies 2 to 119 (DVLIVDDSPV…HPDFERDVES (118 aa)). Aspartate 52 is modified (4-aspartylphosphate). Positions 157–340 (EGFQPGVIAI…LSPPRIAALL (184 aa)) constitute a CheB-type methylesterase domain. Residues serine 169, histidine 196, and aspartate 289 contribute to the active site.

It belongs to the CheB family. Phosphorylated by CheA. Phosphorylation of the N-terminal regulatory domain activates the methylesterase activity.

The protein localises to the cytoplasm. It carries out the reaction [protein]-L-glutamate 5-O-methyl ester + H2O = L-glutamyl-[protein] + methanol + H(+). It catalyses the reaction L-glutaminyl-[protein] + H2O = L-glutamyl-[protein] + NH4(+). In terms of biological role, involved in chemotaxis. Part of a chemotaxis signal transduction system that modulates chemotaxis in response to various stimuli. Catalyzes the demethylation of specific methylglutamate residues introduced into the chemoreceptors (methyl-accepting chemotaxis proteins or MCP) by CheR. Also mediates the irreversible deamidation of specific glutamine residues to glutamic acid. This Hahella chejuensis (strain KCTC 2396) protein is Protein-glutamate methylesterase/protein-glutamine glutaminase 3.